The chain runs to 976 residues: Serine/threonine-protein kinase CLA4 (976 aa).

A disordered region spans residues 1–46 (MTSIYTSDLKNHRRAPPPPNGAAGSGSGSSSGSGSGSGSGSGSGSL). The span at 23–43 (AGSGSGSSSGSGSGSGSGSGS) shows a compositional bias: gly residues. A PH domain is found at 73 to 184 (SKRQSGWVHV…WLDAFTTKCP (112 aa)). Residues 207-231 (LTNGSLNGNSSSSPTSGLSSSSVLT) are disordered. The 14-residue stretch at 237–250 (VSGPINFTHKVHVG) folds into the CRIB domain. Disordered regions lie at residues 298–522 (GGNS…KIHP) and 559–658 (SKKS…QLKK). Low complexity-rich tracts occupy residues 313–332 (NSKT…AKNN) and 371–411 (LNGS…PLNN). Residues 430 to 440 (SGTSSDTYSNK) are compositionally biased toward polar residues. A compositionally biased stretch (basic and acidic residues) spans 441–455 (NHQDRSGYEQQRQQR). Residues 456 to 487 (TDSSQQQQQQQKQHQYQQKSQQQQQQPLSSHQ) are compositionally biased toward low complexity. The span at 496 to 505 (QVPPTLPSSG) shows a compositional bias: pro residues. Low complexity predominate over residues 559–583 (SKKSQQQLASKQPSPPSSQQQQQKP). The segment covering 622 to 635 (NETSGVSKTPSPTD) has biased composition (polar residues). A Protein kinase domain is found at 685–940 (FRIVEKAGQG…TDELLEHSFI (256 aa)). ATP is bound by residues 691 to 699 (AGQGASGNV) and Lys-715. The active-site Proton acceptor is Asp-808.

This sequence belongs to the protein kinase superfamily. STE Ser/Thr protein kinase family. STE20 subfamily. Interacts (via the CRIB domain) with CDC42.

The enzyme catalyses L-seryl-[protein] + ATP = O-phospho-L-seryl-[protein] + ADP + H(+). The catalysed reaction is L-threonyl-[protein] + ATP = O-phospho-L-threonyl-[protein] + ADP + H(+). In terms of biological role, ser/Thr kinase required for wild-type filamentous growth, chlamydospore formation, and virulence in mouse systemic infection. This chain is Serine/threonine-protein kinase CLA4 (CLA4), found in Candida albicans (strain SC5314 / ATCC MYA-2876) (Yeast).